The following is a 278-amino-acid chain: Tryptophan synthase alpha chain (278 aa).

Residues E50 and D61 each act as proton acceptor in the active site.

The protein belongs to the TrpA family. In terms of assembly, tetramer of two alpha and two beta chains.

It carries out the reaction (1S,2R)-1-C-(indol-3-yl)glycerol 3-phosphate + L-serine = D-glyceraldehyde 3-phosphate + L-tryptophan + H2O. It functions in the pathway amino-acid biosynthesis; L-tryptophan biosynthesis; L-tryptophan from chorismate: step 5/5. In terms of biological role, the alpha subunit is responsible for the aldol cleavage of indoleglycerol phosphate to indole and glyceraldehyde 3-phosphate. The chain is Tryptophan synthase alpha chain from Methylorubrum populi (strain ATCC BAA-705 / NCIMB 13946 / BJ001) (Methylobacterium populi).